The chain runs to 160 residues: UPF0178 protein PSPA7_5991 (160 aa).

The protein belongs to the UPF0178 family.

The sequence is that of UPF0178 protein PSPA7_5991 from Pseudomonas paraeruginosa (strain DSM 24068 / PA7) (Pseudomonas aeruginosa (strain PA7)).